The following is a 291-amino-acid chain: Bis(5'-nucleosyl)-tetraphosphatase, symmetrical (291 aa).

This sequence belongs to the Ap4A hydrolase family.

The catalysed reaction is P(1),P(4)-bis(5'-adenosyl) tetraphosphate + H2O = 2 ADP + 2 H(+). Hydrolyzes diadenosine 5',5'''-P1,P4-tetraphosphate to yield ADP. This Coxiella burnetii (strain RSA 331 / Henzerling II) protein is Bis(5'-nucleosyl)-tetraphosphatase, symmetrical.